A 592-amino-acid polypeptide reads, in one-letter code: A-type ATP synthase subunit A (592 aa).

ATP is bound at residue 236-243 (GPFGSGKT).

Belongs to the ATPase alpha/beta chains family. Has multiple subunits with at least A(3), B(3), C, D, E, F, H, I and proteolipid K(x).

Its subcellular location is the cell membrane. The catalysed reaction is ATP + H2O + 4 H(+)(in) = ADP + phosphate + 5 H(+)(out). Functionally, component of the A-type ATP synthase that produces ATP from ADP in the presence of a proton gradient across the membrane. The A chain is the catalytic subunit. The protein is A-type ATP synthase subunit A of Methanopyrus kandleri (strain AV19 / DSM 6324 / JCM 9639 / NBRC 100938).